A 325-amino-acid chain; its full sequence is Elongation factor P--(R)-beta-lysine ligase (325 aa).

76-78 (SPE) is a substrate binding site. Residues 100 to 102 (RNE) and Asn109 contribute to the ATP site. Tyr118 provides a ligand contact to substrate. Residue 244-245 (EL) coordinates ATP. Residue Glu251 coordinates substrate. Residue Gly300 participates in ATP binding.

It belongs to the class-II aminoacyl-tRNA synthetase family. EpmA subfamily. Homodimer.

The catalysed reaction is D-beta-lysine + L-lysyl-[protein] + ATP = N(6)-((3R)-3,6-diaminohexanoyl)-L-lysyl-[protein] + AMP + diphosphate + H(+). Its function is as follows. With EpmB is involved in the beta-lysylation step of the post-translational modification of translation elongation factor P (EF-P). Catalyzes the ATP-dependent activation of (R)-beta-lysine produced by EpmB, forming a lysyl-adenylate, from which the beta-lysyl moiety is then transferred to the epsilon-amino group of a conserved specific lysine residue in EF-P. The sequence is that of Elongation factor P--(R)-beta-lysine ligase from Hamiltonella defensa subsp. Acyrthosiphon pisum (strain 5AT).